The sequence spans 106 residues: Ribonuclease P protein component 4 (106 aa).

Residues C57, C60, C83, and C86 each contribute to the Zn(2+) site.

It belongs to the eukaryotic/archaeal RNase P protein component 4 family. As to quaternary structure, consists of a catalytic RNA component and at least 4-5 protein subunits. Zn(2+) serves as cofactor.

The protein resides in the cytoplasm. The enzyme catalyses Endonucleolytic cleavage of RNA, removing 5'-extranucleotides from tRNA precursor.. Its function is as follows. Part of ribonuclease P, a protein complex that generates mature tRNA molecules by cleaving their 5'-ends. This is Ribonuclease P protein component 4 from Saccharolobus solfataricus (strain ATCC 35092 / DSM 1617 / JCM 11322 / P2) (Sulfolobus solfataricus).